A 390-amino-acid polypeptide reads, in one-letter code: Succinyl-diaminopimelate desuccinylase (390 aa).

Histidine 74 contributes to the Zn(2+) binding site. Aspartate 76 is a catalytic residue. Aspartate 107 serves as a coordination point for Zn(2+). The Proton acceptor role is filled by glutamate 140. Zn(2+)-binding residues include glutamate 141, glutamate 169, and histidine 363.

It belongs to the peptidase M20A family. DapE subfamily. As to quaternary structure, homodimer. Zn(2+) is required as a cofactor. The cofactor is Co(2+).

The enzyme catalyses N-succinyl-(2S,6S)-2,6-diaminopimelate + H2O = (2S,6S)-2,6-diaminopimelate + succinate. The protein operates within amino-acid biosynthesis; L-lysine biosynthesis via DAP pathway; LL-2,6-diaminopimelate from (S)-tetrahydrodipicolinate (succinylase route): step 3/3. In terms of biological role, catalyzes the hydrolysis of N-succinyl-L,L-diaminopimelic acid (SDAP), forming succinate and LL-2,6-diaminopimelate (DAP), an intermediate involved in the bacterial biosynthesis of lysine and meso-diaminopimelic acid, an essential component of bacterial cell walls. The sequence is that of Succinyl-diaminopimelate desuccinylase from Bartonella quintana (strain Toulouse) (Rochalimaea quintana).